The primary structure comprises 304 residues: Acetylxylan esterase A (304 aa).

Positions 1–19 (MVKLQYLLSILLYAYSCTA) are cleaved as a signal peptide. Serine 147 acts as the Charge relay system in catalysis. N-linked (GlcNAc...) asparagine glycosylation is present at asparagine 189.

It belongs to the carbohydrate esterase 1 (CE1) family. AxeA subfamily. Monomer.

It localises to the secreted. The enzyme catalyses Deacetylation of xylans and xylo-oligosaccharides.. It functions in the pathway glycan degradation; xylan degradation. In terms of biological role, acetylxylan esterase involved in the hydrolysis of xylan, a major structural heterogeneous polysaccharide found in plant biomass representing the second most abundant polysaccharide in the biosphere, after cellulose. Degrades acetylated xylans by cleaving acetyl side groups from the hetero-xylan backbone. In Emericella nidulans (strain FGSC A4 / ATCC 38163 / CBS 112.46 / NRRL 194 / M139) (Aspergillus nidulans), this protein is Acetylxylan esterase A (axeA).